The primary structure comprises 418 residues: uncharacterized protein (418 aa).

The disordered stretch occupies residues 1 to 24; the sequence is MSGTAGFITVSPGPPTEAPGGFPR.

The protein to A.pernix APE_1276 and S.solfataricus SSO2105.

This is an uncharacterized protein from Aeropyrum pernix (strain ATCC 700893 / DSM 11879 / JCM 9820 / NBRC 100138 / K1).